Consider the following 498-residue polypeptide: Probable malate:quinone oxidoreductase (498 aa).

It belongs to the MQO family. Requires FAD as cofactor.

It carries out the reaction (S)-malate + a quinone = a quinol + oxaloacetate. It functions in the pathway carbohydrate metabolism; tricarboxylic acid cycle; oxaloacetate from (S)-malate (quinone route): step 1/1. The chain is Probable malate:quinone oxidoreductase from Prochlorococcus marinus (strain MIT 9301).